Reading from the N-terminus, the 1640-residue chain is Phospholipase D C (1640 aa).

A compositionally biased stretch (polar residues) spans 122–132; that stretch reads SHRSNQSFNHS. 4 disordered regions span residues 122–247, 264–283, 439–499, and 521–541; these read SHRS…KRLS, HNQNHQNHQNHQNHHHHTTT, EKQQ…YKYN, and DDEYYYGEYDDEDDSKPPSQE. Low complexity predominate over residues 133–193; sequence NSTTPLNTTN…YSSDNSYLHN (61 aa). The span at 197–231 shows a compositional bias: acidic residues; it reads DIYEDEDDEDDEDDDDDEDEDDEGKEFEQDDEDES. Polar residues predominate over residues 232 to 247; the sequence is TISSMSLKNSQAKRLS. Low complexity-rich tracts occupy residues 264–273 and 467–499; these read HNQNHQNHQN and TTTTATTNNNNNNNNNNNNNNNNNNNNNSYKYN. Over residues 521-534 the composition is skewed to acidic residues; the sequence is DDEYYYGEYDDEDD. A PLD phosphodiesterase 1 domain is found at 1009-1036; that stretch reads LYWSHHQKVVVVDQRIAFIGGLDLCFGR. Active-site residues include His-1014, Lys-1016, and Asp-1021. Low complexity-rich tracts occupy residues 1149–1274 and 1282–1296; these read INNN…NNLN and HNNSLPHQLNNQQQQ. The segment at 1149–1315 is disordered; that stretch reads INNNNNNANN…YQPPLPPQQR (167 aa). Basic residues predominate over residues 1297-1306; that stretch reads QHHHHHHHHY. Residues 1460–1487 form the PLD phosphodiesterase 2 domain; it reads EQIYVHSKVLIVDDKIAIIGSANINDRS. Residues His-1465, Lys-1467, and Asp-1472 contribute to the active site.

The protein belongs to the phospholipase D family.

The catalysed reaction is a 1,2-diacyl-sn-glycero-3-phosphocholine + H2O = a 1,2-diacyl-sn-glycero-3-phosphate + choline + H(+). Inhibited by butan-1-ol. Plays a role in cell growth. Hydrolyzes membrane phospholipids, such as PtdCho (phosphatidylcholine), producing the free headgroup and PtdOH (phosphatidic acid; signaling molecule on its own). Involved in the inhibition of actin-based motility and endocytosis. Its inhibition causes complete collapse of F-actin organization. The chain is Phospholipase D C (pldC) from Dictyostelium discoideum (Social amoeba).